Consider the following 303-residue polypeptide: Elongation factor Ts (303 aa).

The interval threonine 80–valine 83 is involved in Mg(2+) ion dislocation from EF-Tu.

Belongs to the EF-Ts family.

Its subcellular location is the cytoplasm. Functionally, associates with the EF-Tu.GDP complex and induces the exchange of GDP to GTP. It remains bound to the aminoacyl-tRNA.EF-Tu.GTP complex up to the GTP hydrolysis stage on the ribosome. The polypeptide is Elongation factor Ts (Clostridium botulinum (strain Alaska E43 / Type E3)).